We begin with the raw amino-acid sequence, 355 residues long: Daphnetin O-methyltransferase 1 (355 aa).

Residues D222, D242, and K256 each coordinate S-adenosyl-L-homocysteine. The active-site Proton acceptor is the H260.

It belongs to the class I-like SAM-binding methyltransferase superfamily. Cation-independent O-methyltransferase family. COMT subfamily.

It carries out the reaction 7,8-dihydroxycoumarin + S-adenosyl-L-methionine = 7-hydroxy-8-methoxycoumarin + S-adenosyl-L-homocysteine + H(+). Its pathway is aromatic compound metabolism. It participates in secondary metabolite biosynthesis. In terms of biological role, O-methyltransferase involved in the biosynthesis of coumarins natural products such as daphnetin derivatives. Catalyzes specifically the methylation of daphnetin (7,8-dihydroxycoumarin) to produce hydrangetin (7-hydroxy-8-methoxycoumarin). Probably involved in acclimation to low temperature conditions. The polypeptide is Daphnetin O-methyltransferase 1 (Secale cereale (Rye)).